Reading from the N-terminus, the 927-residue chain is Disks large homolog 1 (927 aa).

The L27 domain maps to 4-64 (RKQDTQRALT…FYEVTLLDNP (61 aa)). 3 PDZ domains span residues 223–310 (EITL…RRRK), 318–405 (DIKL…AKPT), and 466–547 (KVVL…QYRP). In terms of domain architecture, SH3 spans 581–651 (KRSLYVRALF…PSKRRVEKKE (71 aa)). Residues 692–719 (DQSEMETSDVDQHVTSNASDSESSYRGQ) form a disordered region. Polar residues predominate over residues 704-717 (HVTSNASDSESSYR). In terms of domain architecture, Guanylate kinase-like spans 737–912 (SRPVIILGPT…IYNQIKQIIE (176 aa)).

The protein belongs to the MAGUK family.

The protein localises to the cell membrane. It is found in the endoplasmic reticulum membrane. It localises to the cell junction. The protein resides in the cytoplasm. Its subcellular location is the apical cell membrane. In terms of biological role, essential multidomain scaffolding protein required for normal development. Recruits channels, receptors and signaling molecules to discrete plasma membrane domains in polarized cells. Promotes epithelial cell layer barrier function via maintaining cell-cell adhesion. May play a role in adherens junction assembly, signal transduction and cell proliferation. The sequence is that of Disks large homolog 1 (dlg1) from Xenopus tropicalis (Western clawed frog).